The primary structure comprises 340 residues: ATP-dependent 6-phosphofructokinase (340 aa).

Gly-11 contacts ATP. 21–25 (RAVVR) is a binding site for ADP. ATP-binding positions include 72-73 (RY) and 102-105 (GDGS). Mg(2+) is bound at residue Asp-103. 125–127 (TID) is a binding site for substrate. Asp-127 acts as the Proton acceptor in catalysis. Arg-154 contacts ADP. Residues Arg-162 and 169-171 (MGR) contribute to the substrate site. Residues 185–187 (GAD) and 213–215 (KHH) contribute to the ADP site. Substrate-binding positions include Glu-222, Arg-244, and 250–253 (HLLR).

It belongs to the phosphofructokinase type A (PFKA) family. ATP-dependent PFK group I subfamily. Prokaryotic clade 'B1' sub-subfamily. In terms of assembly, homotetramer. Mg(2+) is required as a cofactor.

The protein resides in the cytoplasm. It carries out the reaction beta-D-fructose 6-phosphate + ATP = beta-D-fructose 1,6-bisphosphate + ADP + H(+). The protein operates within carbohydrate degradation; glycolysis; D-glyceraldehyde 3-phosphate and glycerone phosphate from D-glucose: step 3/4. Its activity is regulated as follows. Allosterically activated by ADP and other diphosphonucleosides, and allosterically inhibited by phosphoenolpyruvate. Catalyzes the phosphorylation of D-fructose 6-phosphate to fructose 1,6-bisphosphate by ATP, the first committing step of glycolysis. The sequence is that of ATP-dependent 6-phosphofructokinase from Streptococcus agalactiae serotype Ia (strain ATCC 27591 / A909 / CDC SS700).